Consider the following 545-residue polypeptide: Pseudouridylate synthase RPUSD2 (545 aa).

The tract at residues 48–121 (GLRASHQQNG…PPPKKRRTGV (74 aa)) is disordered. A Phosphoserine modification is found at S68. D274 is an active-site residue. At T477 the chain carries Phosphothreonine.

This sequence belongs to the pseudouridine synthase RluA family.

It carries out the reaction a uridine in mRNA = a pseudouridine in mRNA. In terms of biological role, pseudouridine synthase that catalyzes pseudouridylation of mRNAs. The chain is Pseudouridylate synthase RPUSD2 from Homo sapiens (Human).